The primary structure comprises 903 residues: MENPQKAGPLLRDLTRAFSHYNKHNLLLKKNLKETIAFFREIRQNHSNTCSTSGPELDSGQLRCISFPRHDEDHLQKVVGCAPYILILGQDCSARYQLLNCMLGERLLPLGSDAGGACGVEGGACRRRKLCFTHGRQTRLSLALPGQYELVHQLAAHCGRWDTVPREDLEIQECEDPAQRLAELEITLHHALLQEAKIMVLPCRNVQPVEEALEDCRRGILPIILYAVSKATLSADQLSELQKVRETLPYPVCFVRIPTEPAPDPPGQRSALFAQLVSQELIGGAAGNCACGAPAQTPGKMQGILGEDLERLHRVLVPFARQVLQSQQVEATTLLNAVHCRCLDLFINQAFDMQRDLQITPRRLEYTREKEGELYSSLMAIANRKQEEMKEMIVETLESMKEQLLEDAANLEFTDIIMTSNSEPMSSKDIKVCISQIQDLIVIRLNQAVANKLTSSVDYLRESFVGTLERCLCSLEKSTGEPCAHNVTSNHLKQILNAAYHVEVTFHSGSSVTRLFWEQIKQIIHRISWVNPPSVTSEWKRKVAQDAIESLSAAKLAKSICSQFRTRLNSSHEAFASSLRQLEEGHTGRLERTEDLWLRVRKDHAPRLARLSLESRSLRDILLHGKPKLGRELGRGQYGVVYLCDNWAGRHPCALKSVVPPDDKHWNDLALEFHYTRSLPKHERLVNLHGSVIDHSYGGGSSIAVLLIMERLHRDLYTGLKAGLVLKERLQIALDVVEGIRFLHGQGLLHRDIKLKNVLLDKQNRAKITDLGFCKPEAMMSGSIVGTPIHMAPELFTGKYDNSVDVYAFGILFWYLCTGSVKLPEAFERCSSKDQLWTNVKKGSRPERLASFDEECWQLMEACWNGDPSQRPLLGIVQPSLQSIMDRLCNDSDQKSGNLEDSN.

Positions 382–414 form a coiled coil; that stretch reads ANRKQEEMKEMIVETLESMKEQLLEDAANLEFT. Positions 627–881 constitute a Protein kinase domain; it reads PKLGRELGRG…PLLGIVQPSL (255 aa). ATP is bound by residues 633 to 641 and lysine 656; that span reads LGRGQYGVV. Aspartate 752 serves as the catalytic Proton acceptor.

This sequence belongs to the protein kinase superfamily. Ser/Thr protein kinase family.

It is found in the cytoplasm. It localises to the cell membrane. The protein localises to the apical cell membrane. Its subcellular location is the basolateral cell membrane. The protein resides in the cell junction. It catalyses the reaction L-seryl-[protein] + ATP = O-phospho-L-seryl-[protein] + ADP + H(+). It carries out the reaction L-threonyl-[protein] + ATP = O-phospho-L-threonyl-[protein] + ADP + H(+). The catalysed reaction is L-tyrosyl-[protein] + ATP = O-phospho-L-tyrosyl-[protein] + ADP + H(+). May act as a positive regulator of ERK phosphorylation downstream of fibroblast growth factor-receptor activation. May induce both caspase-dependent apoptosis and caspase-independent cell death. May play a role in the embryonic development. The chain is Dual serine/threonine and tyrosine protein kinase from Pimephales promelas (Fathead minnow).